The primary structure comprises 25 residues: Large ribosomal subunit protein uL30 (25 aa).

This sequence belongs to the universal ribosomal protein uL30 family. As to quaternary structure, part of the 50S ribosomal subunit.

The sequence is that of Large ribosomal subunit protein uL30 (rpmD) from Pseudomonas fluorescens biotype A.